Reading from the N-terminus, the 443-residue chain is DNA primase DnaG (443 aa).

A Toprim domain is found at Asp169 to Tyr243. Mg(2+)-binding residues include Glu175, Asp217, and Asp219.

The protein belongs to the archaeal DnaG primase family. Forms a ternary complex with MCM helicase and DNA. The cofactor is Mg(2+).

The enzyme catalyses ssDNA + n NTP = ssDNA/pppN(pN)n-1 hybrid + (n-1) diphosphate.. Functionally, RNA polymerase that catalyzes the synthesis of short RNA molecules used as primers for DNA polymerase during DNA replication. This is DNA primase DnaG from Methanococcus vannielii (strain ATCC 35089 / DSM 1224 / JCM 13029 / OCM 148 / SB).